Consider the following 314-residue polypeptide: Ferrochelatase (314 aa).

H184 and E259 together coordinate Fe cation.

This sequence belongs to the ferrochelatase family.

Its subcellular location is the cytoplasm. It catalyses the reaction heme b + 2 H(+) = protoporphyrin IX + Fe(2+). Its pathway is porphyrin-containing compound metabolism; protoheme biosynthesis; protoheme from protoporphyrin-IX: step 1/1. Functionally, catalyzes the ferrous insertion into protoporphyrin IX. The chain is Ferrochelatase from Chlamydia trachomatis serovar A (strain ATCC VR-571B / DSM 19440 / HAR-13).